A 365-amino-acid polypeptide reads, in one-letter code: Flagellar P-ring protein (365 aa).

A signal peptide spans 1 to 19; it reads MIKFLSALILLLVTTAAQA.

This sequence belongs to the FlgI family. In terms of assembly, the basal body constitutes a major portion of the flagellar organelle and consists of four rings (L,P,S, and M) mounted on a central rod.

It localises to the periplasm. Its subcellular location is the bacterial flagellum basal body. In terms of biological role, assembles around the rod to form the L-ring and probably protects the motor/basal body from shearing forces during rotation. This is Flagellar P-ring protein from Shigella boydii serotype 4 (strain Sb227).